Consider the following 895-residue polypeptide: Dystroglycan 1 (895 aa).

Positions 1–29 (MRMSVGSAVPLPLWGRTFLLLLSVAVTQS) are cleaved as a signal peptide. The interval 30-408 (HWPSEPSEAV…SQIRPTMTIP (379 aa)) is required for laminin recognition. The interval 49–71 (SMHSALSDLHETVPTVVGIPDGT) is O-glycosylated at one site. A glycan (N-linked (GlcNAc...) asparagine) is linked at N141. A disulfide bridge connects residues C182 and C264. The interval 316-485 (ATPTPVTAIG…PATRMRTTTS (170 aa)) is mucin-like domain. O-linked (Man6P...) threonine glycosylation is found at T317, T319, and T379. The disordered stretch occupies residues 381–500 (TLGPIQPTRV…GEPNQRPELK (120 aa)). Over residues 393–403 (AGTTVPSQIRP) the composition is skewed to polar residues. A compositionally biased stretch (low complexity) spans 413–447 (PSTVTTPPTTTTKKPRVSTPRPATPSTDSSTTTTR). The tract at residues 463-485 (TTKAPITRLETASPATRMRTTTS) is O-glycosylated at seven sites with GalNAc. One can recognise a Peptidase S72 domain in the interval 603–712 (KAPARFKAKL…MSITVTGSGS (110 aa)). N-linked (GlcNAc...) asparagine glycosylation is found at N641, N649, and N661. The Extracellular segment spans residues 654 to 749 (SIVVEWTNNT…DPEKSSEDDV (96 aa)). A disulfide bridge links C669 with C713. Residues 724–747 (PMRVPSEAPATEVPDRDPEKSSED) are disordered. The segment covering 736-747 (VPDRDPEKSSED) has biased composition (basic and acidic residues). The helical transmembrane segment at 750 to 775 (YLHTVIPAVVVAAILLIAGIIAMICY) threads the bilayer. The Nuclear localization signal motif lies at 776-782 (RKKRKGK). The Cytoplasmic portion of the chain corresponds to 776–895 (RKKRKGKLTL…YRSPPPYVPP (120 aa)). A Phosphothreonine modification is found at T790. A required for interaction with CAV3 region spans residues 819-895 (LQEEKAPLPP…YRSPPPYVPP (77 aa)). The interval 823–895 (KAPLPPPEYP…YRSPPPYVPP (73 aa)) is disordered. Over residues 832–846 (PNQSMPETTPLNQDT) the composition is skewed to polar residues. Residues 859–870 (SAPPYQPPPPFT) show a composition bias toward pro residues. The segment at 880-895 (PKNMTPYRSPPPYVPP) is required for binding DMD and UTRN. Residues 889-892 (PPPY) carry the PPXY motif motif. Y892 is modified (phosphotyrosine; by SRC).

As to quaternary structure, monomer. Heterodimer of alpha- and beta-dystroglycan subunits which are the central components of the dystrophin-glycoprotein complex. This complex then can form a dystrophin-associated glycoprotein complex (DGC) which is composed of three subcomplexes: a cytoplasmic complex comprised of DMD (or UTRN), DTNA and a number of syntrophins, such as SNTB1, SNTB2, SNTG1 and SNTG2, the transmembrane dystroglycan complex, and the sarcoglycan-sarcospan complex. Interacts (via the N-terminal of alphaDAG1) with LARGE1; the interaction enhances laminin binding. Interacts with SGCD. Interacts with AGR2 and AGR3. Interacts (betaDAG1) with DMD; the interaction is inhibited by phosphorylation on the PPXY motif. Interacts (betaDAG1, via its PPXY motif) with UTRN (via its WWW and ZZ domains); the interaction is inhibited by phosphorylation on the PPXY motif. Interacts (betaDAG1, via its phosphorylated PPXY motif) with the SH2 domain-containing proteins, FYN, CSK, NCK and SHC. Interacts (betaDAG1) with CAV3 (via a central WW-like domain); the interaction disrupts the binding of DMD. BetaDAG1 directly interacts with ANK3, but not with ANK2; this interaction does not interfere with DMD-binding and is required for retention at costameres. Identified in a dystroglycan complex that contains at least PRX, DRP2, UTRN, DMD and DAG1. Interacts with POMGNT1. BetaDAG1 interacts with CD93. Post-translationally, O-glycosylated. POMGNT1 catalyzes the initial addition of N-acetylglucosamine, giving rise to the GlcNAc(beta1-2)Man(alpha1-)O-Ser/Thr moiety and thus providing the necessary basis for the addition of further carbohydrate moieties. Heavily O-glycosylated comprising of up to two thirds of its mass and the carbohydrate composition differs depending on tissue type. Mucin-type O-glycosylation is important for ligand binding activity. O-mannosylation is found in high abundance in both brain and muscle where the most abundant glycan is Sia-alpha-2-3-Gal-beta-1-4-Glc-NAc-beta-1-2-Man. In muscle, glycosylation on Thr-317, Thr-319 and Thr-379 by a phosphorylated O-mannosyl glycan with the structure 2-(N-acetylamido)-2-deoxygalactosyl-beta-1,3-2-(N-acetylamido)-2-deoxyglucosyl-beta-1,4-6-phosphomannose is mediated by like-acetylglucosaminyltransferase (LARGE1) protein amd is required for laminin binding. O-glycosylated in the N-terminal region with a core 1 or possibly core 8 glycan. The brain form displays a unique glycosylation pattern which is absent in other tissues; this form shows enhanced binding to laminin LAMA5 compared to the skeletal muscle form. N-glycosylated. In terms of processing, autolytic cleavage produces the alpha and beta subunits. In cutaneous cells, as well as in certain pathological conditions, shedding of beta-dystroglycan can occur releasing a peptide of about 30 kDa. Post-translationally, SRC-mediated phosphorylation of the PPXY motif of the beta subunit recruits SH2 domain-containing proteins, but inhibits binding to WWW domain-containing proteins, DMD and UTRN. This phosphorylation also inhibits nuclear entry. Expressed in brain (at protein level). Expressed in the myelin sheath of peripheral nerves.

It is found in the secreted. The protein localises to the extracellular space. The protein resides in the cell membrane. It localises to the cytoplasm. Its subcellular location is the cytoskeleton. It is found in the nucleus. The protein localises to the nucleoplasm. The protein resides in the sarcolemma. It localises to the postsynaptic cell membrane. Functionally, the dystroglycan complex is involved in a number of processes including laminin and basement membrane assembly, sarcolemmal stability, cell survival, peripheral nerve myelination, nodal structure, cell migration, and epithelial polarization. Its function is as follows. Extracellular peripheral glycoprotein that acts as a receptor for extracellular matrix proteins containing laminin-G domains. Receptor for laminin-2 (LAMA2) and agrin in peripheral nerve Schwann cells. Also acts as a receptor for laminin LAMA5. In terms of biological role, transmembrane protein that plays important roles in connecting the extracellular matrix to the cytoskeleton. Acts as a cell adhesion receptor in both muscle and non-muscle tissues. Receptor for both DMD and UTRN and, through these interactions, scaffolds axin to the cytoskeleton. Also functions in cell adhesion-mediated signaling and implicated in cell polarity. In Bos taurus (Bovine), this protein is Dystroglycan 1.